Reading from the N-terminus, the 140-residue chain is Putative nickel-responsive regulator (140 aa).

Ni(2+) contacts are provided by His-81, His-92, His-94, and Cys-100.

Belongs to the transcriptional regulatory CopG/NikR family. Ni(2+) is required as a cofactor.

Its function is as follows. Transcriptional regulator. This Methanothrix thermoacetophila (strain DSM 6194 / JCM 14653 / NBRC 101360 / PT) (Methanosaeta thermophila) protein is Putative nickel-responsive regulator.